Consider the following 138-residue polypeptide: Protein FAM136A (138 aa).

A2 is modified (N-acetylalanine). Residues T124 and T126 each carry the phosphothreonine modification.

The protein belongs to the FAM136 family.

The sequence is that of Protein FAM136A (Fam136a) from Mus musculus (Mouse).